Reading from the N-terminus, the 130-residue chain is Ribosome-binding factor A (130 aa).

This sequence belongs to the RbfA family. In terms of assembly, monomer. Binds 30S ribosomal subunits, but not 50S ribosomal subunits or 70S ribosomes.

Its subcellular location is the cytoplasm. Functionally, one of several proteins that assist in the late maturation steps of the functional core of the 30S ribosomal subunit. Associates with free 30S ribosomal subunits (but not with 30S subunits that are part of 70S ribosomes or polysomes). Required for efficient processing of 16S rRNA. May interact with the 5'-terminal helix region of 16S rRNA. The polypeptide is Ribosome-binding factor A (Roseiflexus sp. (strain RS-1)).